We begin with the raw amino-acid sequence, 335 residues long: Phosphatidylglycerol--prolipoprotein diacylglyceryl transferase (335 aa).

The next 3 membrane-spanning stretches (helical) occupy residues 31–51 (IYWY…TYSL), 67–87 (YIFL…LAIG), and 100–120 (LAIQ…FPLI). A 1,2-diacyl-sn-glycero-3-phospho-(1'-sn-glycerol) is bound at residue arginine 163. Transmembrane regions (helical) follow at residues 213 to 233 (PLFL…YFGL), 235 to 255 (YIKQ…YGVI), and 277 to 297 (SLLL…APIL).

Belongs to the Lgt family.

It is found in the cell membrane. The catalysed reaction is L-cysteinyl-[prolipoprotein] + a 1,2-diacyl-sn-glycero-3-phospho-(1'-sn-glycerol) = an S-1,2-diacyl-sn-glyceryl-L-cysteinyl-[prolipoprotein] + sn-glycerol 1-phosphate + H(+). It functions in the pathway protein modification; lipoprotein biosynthesis (diacylglyceryl transfer). In terms of biological role, catalyzes the transfer of the diacylglyceryl group from phosphatidylglycerol to the sulfhydryl group of the N-terminal cysteine of a prolipoprotein, the first step in the formation of mature lipoproteins. This is Phosphatidylglycerol--prolipoprotein diacylglyceryl transferase from Ureaplasma urealyticum serovar 10 (strain ATCC 33699 / Western).